Here is a 699-residue protein sequence, read N- to C-terminus: 4-alpha-glucanotransferase (699 aa).

The protein belongs to the disproportionating enzyme family.

The protein resides in the cytoplasm. It carries out the reaction Transfers a segment of a (1-&gt;4)-alpha-D-glucan to a new position in an acceptor, which may be glucose or a (1-&gt;4)-alpha-D-glucan.. The chain is 4-alpha-glucanotransferase (malQ) from Haemophilus influenzae (strain ATCC 51907 / DSM 11121 / KW20 / Rd).